The following is a 754-amino-acid chain: Endoribonuclease Dicer-like (754 aa).

The region spanning 132–251 (QLMCDAKRLS…LPPELCLLLP (120 aa)) is the PAZ domain. 2 RNase III domains span residues 298–418 (FAIT…TGPN) and 613–734 (AQTV…LACG). Glutamate 336, aspartate 404, glutamate 407, glutamate 649, aspartate 720, and glutamate 723 together coordinate Mn(2+).

Homodimer. Requires Mg(2+) as cofactor. It depends on Mn(2+) as a cofactor.

Functionally, involved in cleaving double-stranded RNA in the RNA interference (RNAi) pathway. It produces 21 to 23 bp dsRNAs (siRNAs) which target the selective destruction of homologous RNAs. The chain is Endoribonuclease Dicer-like from Giardia intestinalis (strain ATCC 50803 / WB clone C6) (Giardia lamblia).